Consider the following 151-residue polypeptide: Large-conductance mechanosensitive channel (151 aa).

The next 3 membrane-spanning stretches (helical) occupy residues 14–34, 38–58, and 86–106; these read VVDM…VNTL, VLMP…LYLI, and GLFL…FLLV.

This sequence belongs to the MscL family. Homopentamer.

The protein localises to the cell inner membrane. In terms of biological role, channel that opens in response to stretch forces in the membrane lipid bilayer. May participate in the regulation of osmotic pressure changes within the cell. In Pelodictyon phaeoclathratiforme (strain DSM 5477 / BU-1), this protein is Large-conductance mechanosensitive channel.